A 394-amino-acid polypeptide reads, in one-letter code: Flap endonuclease 1-A (394 aa).

An N-domain region spans residues 1–105; the sequence is MGIKGLTGLL…GVLSKRLERR (105 aa). Asp34 contributes to the Mg(2+) binding site. DNA-binding residues include Arg47 and Arg71. Asp87, Glu159, Glu161, Asp180, and Asp182 together coordinate Mg(2+). The tract at residues 123–254 is I-domain; that stretch reads DVDRFSRRTV…KSALKLIREY (132 aa). Glu159 is a binding site for DNA. Residues Gly232 and Asp234 each contribute to the DNA site. Asp234 serves as a coordination point for Mg(2+). Positions 341-349 are interaction with PCNA; sequence QQGRLDGFF. The tract at residues 356-375 is disordered; sequence KAAAPAPVGKAKGKGKVDAK.

The protein belongs to the XPG/RAD2 endonuclease family. FEN1 subfamily. In terms of assembly, interacts with PCNA. Three molecules of FEN1 bind to one PCNA trimer with each molecule binding to one PCNA monomer. PCNA stimulates the nuclease activity without altering cleavage specificity. It depends on Mg(2+) as a cofactor. In terms of processing, phosphorylated. Phosphorylation upon DNA damage induces relocalization to the nuclear plasma.

It localises to the nucleus. It is found in the nucleolus. The protein localises to the nucleoplasm. The protein resides in the mitochondrion. Functionally, structure-specific nuclease with 5'-flap endonuclease and 5'-3' exonuclease activities involved in DNA replication and repair. During DNA replication, cleaves the 5'-overhanging flap structure that is generated by displacement synthesis when DNA polymerase encounters the 5'-end of a downstream Okazaki fragment. It enters the flap from the 5'-end and then tracks to cleave the flap base, leaving a nick for ligation. Also involved in the long patch base excision repair (LP-BER) pathway, by cleaving within the apurinic/apyrimidinic (AP) site-terminated flap. Acts as a genome stabilization factor that prevents flaps from equilibrating into structures that lead to duplications and deletions. Also possesses 5'-3' exonuclease activity on nicked or gapped double-stranded DNA, and exhibits RNase H activity. Also involved in replication and repair of rDNA and in repairing mitochondrial DNA. The protein is Flap endonuclease 1-A of Laccaria bicolor (strain S238N-H82 / ATCC MYA-4686) (Bicoloured deceiver).